We begin with the raw amino-acid sequence, 668 residues long: UvrABC system protein B (668 aa).

Residues 25 to 170 (NSILLGNKYQ…FVGQKISIKE (146 aa)) form the Helicase ATP-binding domain. ATP is bound at residue 38 to 45 (GVTGSGKT). Positions 91–114 (YYDYYQPESYVPSKDLFIEKEATI) match the Beta-hairpin motif. In terms of domain architecture, Helicase C-terminal spans 429–595 (QMEDLYSEIQ…TIVKKIQNIL (167 aa)). Positions 622–657 (KKLIDKLKFDLEEAVNDERFEDAIVLRDKIKELSSK) constitute a UVR domain.

It belongs to the UvrB family. In terms of assembly, forms a heterotetramer with UvrA during the search for lesions. Interacts with UvrC in an incision complex.

It is found in the cytoplasm. Its function is as follows. The UvrABC repair system catalyzes the recognition and processing of DNA lesions. A damage recognition complex composed of 2 UvrA and 2 UvrB subunits scans DNA for abnormalities. Upon binding of the UvrA(2)B(2) complex to a putative damaged site, the DNA wraps around one UvrB monomer. DNA wrap is dependent on ATP binding by UvrB and probably causes local melting of the DNA helix, facilitating insertion of UvrB beta-hairpin between the DNA strands. Then UvrB probes one DNA strand for the presence of a lesion. If a lesion is found the UvrA subunits dissociate and the UvrB-DNA preincision complex is formed. This complex is subsequently bound by UvrC and the second UvrB is released. If no lesion is found, the DNA wraps around the other UvrB subunit that will check the other stand for damage. The polypeptide is UvrABC system protein B (Borreliella burgdorferi (strain ZS7) (Borrelia burgdorferi)).